The following is a 364-amino-acid chain: UDP-N-acetylglucosamine--N-acetylmuramyl-(pentapeptide) pyrophosphoryl-undecaprenol N-acetylglucosamine transferase (364 aa).

UDP-N-acetyl-alpha-D-glucosamine contacts are provided by residues 10–12 (TGG), N124, S195, I250, and Q295.

Belongs to the glycosyltransferase 28 family. MurG subfamily.

The protein resides in the cell membrane. The catalysed reaction is di-trans,octa-cis-undecaprenyl diphospho-N-acetyl-alpha-D-muramoyl-L-alanyl-D-glutamyl-meso-2,6-diaminopimeloyl-D-alanyl-D-alanine + UDP-N-acetyl-alpha-D-glucosamine = di-trans,octa-cis-undecaprenyl diphospho-[N-acetyl-alpha-D-glucosaminyl-(1-&gt;4)]-N-acetyl-alpha-D-muramoyl-L-alanyl-D-glutamyl-meso-2,6-diaminopimeloyl-D-alanyl-D-alanine + UDP + H(+). It participates in cell wall biogenesis; peptidoglycan biosynthesis. In terms of biological role, cell wall formation. Catalyzes the transfer of a GlcNAc subunit on undecaprenyl-pyrophosphoryl-MurNAc-pentapeptide (lipid intermediate I) to form undecaprenyl-pyrophosphoryl-MurNAc-(pentapeptide)GlcNAc (lipid intermediate II). The chain is UDP-N-acetylglucosamine--N-acetylmuramyl-(pentapeptide) pyrophosphoryl-undecaprenol N-acetylglucosamine transferase from Bacillus cytotoxicus (strain DSM 22905 / CIP 110041 / 391-98 / NVH 391-98).